Here is a 404-residue protein sequence, read N- to C-terminus: Cysteine desulfurase IscS (404 aa).

Pyridoxal 5'-phosphate contacts are provided by residues 75-76, asparagine 155, glutamine 183, and 203-205; these read AT and SGH. Lysine 206 is subject to N6-(pyridoxal phosphate)lysine. Threonine 243 is a binding site for pyridoxal 5'-phosphate. Residue cysteine 328 is the Cysteine persulfide intermediate of the active site. Position 328 (cysteine 328) interacts with [2Fe-2S] cluster.

The protein belongs to the class-V pyridoxal-phosphate-dependent aminotransferase family. NifS/IscS subfamily. As to quaternary structure, homodimer. Forms a heterotetramer with IscU, interacts with other sulfur acceptors. Pyridoxal 5'-phosphate is required as a cofactor.

It is found in the cytoplasm. It catalyses the reaction (sulfur carrier)-H + L-cysteine = (sulfur carrier)-SH + L-alanine. It participates in cofactor biosynthesis; iron-sulfur cluster biosynthesis. In terms of biological role, master enzyme that delivers sulfur to a number of partners involved in Fe-S cluster assembly, tRNA modification or cofactor biosynthesis. Catalyzes the removal of elemental sulfur atoms from cysteine to produce alanine. Functions as a sulfur delivery protein for Fe-S cluster synthesis onto IscU, an Fe-S scaffold assembly protein, as well as other S acceptor proteins. This chain is Cysteine desulfurase IscS, found in Shewanella baltica (strain OS155 / ATCC BAA-1091).